The following is a 132-amino-acid chain: Fatty acid-binding protein, brain (132 aa).

The residue at position 2 (Val2) is an N-acetylvaline. An a fatty acid-binding site is contributed by 127–129 (RHY).

It belongs to the calycin superfamily. Fatty-acid binding protein (FABP) family. In terms of tissue distribution, expressed in brain and other neural tissues.

The protein localises to the cytoplasm. In terms of biological role, B-FABP could be involved in the transport of a so far unknown hydrophobic ligand with potential morphogenic activity during CNS development. It is required for the establishment of the radial glial fiber system in developing brain, a system that is necessary for the migration of immature neurons to establish cortical layers. In Homo sapiens (Human), this protein is Fatty acid-binding protein, brain (FABP7).